The sequence spans 321 residues: Cytochrome c biogenesis protein CcsA (321 aa).

8 helical membrane passes run 17-37 (VVSI…IIGL), 46-63 (MTTF…WIYL), 71-91 (LYES…VPYF), 98-118 (LKAI…SGLL), 143-163 (MVLG…LLVI), 225-245 (IISL…VWAN), 259-273 (TWAF…IYLH), and 286-306 (AIVA…VNLL).

The protein belongs to the CcmF/CycK/Ccl1/NrfE/CcsA family. In terms of assembly, may interact with Ccs1.

Its subcellular location is the plastid. The protein localises to the chloroplast thylakoid membrane. Functionally, required during biogenesis of c-type cytochromes (cytochrome c6 and cytochrome f) at the step of heme attachment. In Morus indica (Mulberry), this protein is Cytochrome c biogenesis protein CcsA.